Reading from the N-terminus, the 657-residue chain is 9-cis-epoxycarotenoid dioxygenase NCED9, chloroplastic (657 aa).

4 residues coordinate Fe cation: His-357, His-406, His-471, and His-642.

It belongs to the carotenoid oxygenase family. Fe(2+) is required as a cofactor. As to expression, expressed in developing siliques, embryo and endosperm.

The protein resides in the plastid. The protein localises to the chloroplast stroma. The catalysed reaction is a 9-cis-epoxycarotenoid + O2 = a 12'-apo-carotenal + 2-cis,4-trans-xanthoxin. The enzyme catalyses 9-cis-violaxanthin + O2 = (3S,5R,6S)-5,6-epoxy-3-hydroxy-5,6-dihydro-12'-apo-beta-caroten-12'-al + 2-cis,4-trans-xanthoxin. It carries out the reaction 9'-cis-neoxanthin + O2 = (3S,5R,6R)-3,5-dihydroxy-6,7-didehydro-5,6-dihydro-12'-apo-beta-caroten-12'-al + 2-cis,4-trans-xanthoxin. Functionally, has a 11,12(11',12') 9-cis epoxycarotenoid cleavage activity. Catalyzes the first step of abscisic-acid biosynthesis from carotenoids. Contributes probably to abscisic acid synthesis for the induction of seed dormancy. The polypeptide is 9-cis-epoxycarotenoid dioxygenase NCED9, chloroplastic (NCED9) (Arabidopsis thaliana (Mouse-ear cress)).